We begin with the raw amino-acid sequence, 324 residues long: DNA repair and recombination protein RadA (324 aa).

Position 114-121 (114-121 (GEFGSGKT)) interacts with ATP.

It belongs to the eukaryotic RecA-like protein family.

Functionally, involved in DNA repair and in homologous recombination. Binds and assemble on single-stranded DNA to form a nucleoprotein filament. Hydrolyzes ATP in a ssDNA-dependent manner and promotes DNA strand exchange between homologous DNA molecules. This Saccharolobus islandicus (strain Y.N.15.51 / Yellowstone #2) (Sulfolobus islandicus) protein is DNA repair and recombination protein RadA.